The sequence spans 471 residues: 7-dehydrocholesterol reductase (471 aa).

The next 8 membrane-spanning stretches (helical) occupy residues 36–56, 95–115, 144–164, 173–193, 233–253, 262–282, 302–322, and 327–347; these read LVSV…FIMA, LYAL…DFCH, LQAW…LSWF, WIPL…FAMI, LFFN…SFAA, VTNS…DFFW, LGWG…LYLV, and QLST…YYIF. NADP(+)-binding positions include Lys354, Arg358, Leu391, Trp396, and 403–404; that span reads NY. The chain crosses the membrane as a helical span at residues 416–436; it reads LACGGGHLLPYFYIIYMTILL. NADP(+)-binding positions include Asp443, 447–451, and Tyr458; that span reads CANKY.

Belongs to the ERG4/ERG24 family. In terms of assembly, interacts with DHCR24; this interaction regulates DHCR7 activity. Interacts with TMEM147. In terms of tissue distribution, highest expression is detected in liver, followed by kidney and brain.

It is found in the endoplasmic reticulum membrane. The enzyme catalyses cholesterol + NADP(+) = 7-dehydrocholesterol + NADPH + H(+). The catalysed reaction is 7-dehydrodesmosterol + NADPH + H(+) = desmosterol + NADP(+). It carries out the reaction 5,6alpha-epoxy-5alpha-cholestan-3beta-ol + H2O = 5alpha-cholestane-3beta,5,6beta-triol. It catalyses the reaction 5,6beta-epoxy-5beta-cholestan-3beta-ol + H2O = 5alpha-cholestane-3beta,5,6beta-triol. The protein operates within steroid biosynthesis; cholesterol biosynthesis. Oxidoreductase that catalyzes the last step of the cholesterol synthesis pathway, which transforms cholesta-5,7-dien-3beta-ol (7-dehydrocholesterol,7-DHC) into cholesterol by reducing the C7-C8 double bond of its sterol core. Can also metabolize cholesta-5,7,24-trien-3beta-ol (7-dehydrodemosterol, 7-DHD) to desmosterol, which is then metabolized by the Delta(24)-sterol reductase (DHCR24) to cholesterol. Modulates ferroptosis (a form of regulated cell death driven by iron-dependent lipid peroxidation) through the metabolic breakdown of the anti-ferroptotic metabolites 7-DHC and 7-DHD which, when accumulated, divert the propagation of peroxyl radical-mediated damage from phospholipid components to its sterol core, protecting plasma and mitochondrial membranes from phospholipid autoxidation. In terms of biological role, component of the microsomal antiestrogen binding site (AEBS), a multiproteic complex at the ER membrane that consists of an association between cholestenol Delta-isomerase/EBP and DHCR7. This complex is responsible for cholesterol-5,6-epoxide hydrolase (ChEH) activity, which consists in the hydration of cholesterol-5,6-epoxides (5,6-EC) into cholestane-3beta,5alpha,6beta-triol (CT). The precise role of each component of this complex has not been described yet. This is 7-dehydrocholesterol reductase (Dhcr7) from Rattus norvegicus (Rat).